The chain runs to 209 residues: GTP cyclohydrolase-2 (209 aa).

49–53 contributes to the GTP binding site; sequence RIHSE. Residues Cys-54, Cys-65, and Cys-67 each contribute to the Zn(2+) site. Residues Gln-70, 92-94, and Thr-114 contribute to the GTP site; that span reads EGR. Asp-126 functions as the Proton acceptor in the catalytic mechanism. Arg-128 serves as the catalytic Nucleophile. GTP contacts are provided by Thr-149 and Lys-154.

Belongs to the GTP cyclohydrolase II family. Zn(2+) serves as cofactor.

The enzyme catalyses GTP + 4 H2O = 2,5-diamino-6-hydroxy-4-(5-phosphoribosylamino)-pyrimidine + formate + 2 phosphate + 3 H(+). The protein operates within cofactor biosynthesis; riboflavin biosynthesis; 5-amino-6-(D-ribitylamino)uracil from GTP: step 1/4. Its function is as follows. Catalyzes the conversion of GTP to 2,5-diamino-6-ribosylamino-4(3H)-pyrimidinone 5'-phosphate (DARP), formate and pyrophosphate. The chain is GTP cyclohydrolase-2 from Shewanella pealeana (strain ATCC 700345 / ANG-SQ1).